The primary structure comprises 592 residues: Glutathione-regulated potassium-efflux system protein KefB (592 aa).

Transmembrane regions (helical) follow at residues 4 to 24, 29 to 49, 55 to 75, 87 to 107, 115 to 135, 152 to 172, 177 to 197, 207 to 227, 230 to 250, 268 to 288, 291 to 311, 324 to 344, and 356 to 376; these read SDFL…VPLA, IGAV…GLGF, EILH…GLEL, IFGV…GLLM, AAVV…LQLM, VLLF…LLAG, HFDW…LIGG, FIAA…LVLG, LFMD…GVLL, GLLL…GVLY, LLWV…VLYL, MQFA…FSTA, and ALLL…MKLV. The RCK N-terminal domain maps to 400–519; it reads KPQVIVVGFG…AGVTQFSRET (120 aa).

This sequence belongs to the monovalent cation:proton antiporter 2 (CPA2) transporter (TC 2.A.37) family. KefB subfamily. In terms of assembly, interacts with the regulatory subunit KefG.

It is found in the cell inner membrane. In terms of biological role, pore-forming subunit of a potassium efflux system that confers protection against electrophiles. Catalyzes K(+)/H(+) antiport. In Escherichia coli O157:H7, this protein is Glutathione-regulated potassium-efflux system protein KefB.